A 275-amino-acid polypeptide reads, in one-letter code: Glutamate racemase (275 aa).

Substrate contacts are provided by residues 22-23 and 54-55; these read DS and YG. The active-site Proton donor/acceptor is C85. 86–87 contributes to the substrate binding site; the sequence is NT. The active-site Proton donor/acceptor is the C196. Residue 197–198 coordinates substrate; it reads TH.

The protein belongs to the aspartate/glutamate racemases family.

It carries out the reaction L-glutamate = D-glutamate. It functions in the pathway cell wall biogenesis; peptidoglycan biosynthesis. Provides the (R)-glutamate required for cell wall biosynthesis. This Pseudomonas syringae pv. tomato (strain ATCC BAA-871 / DC3000) protein is Glutamate racemase.